The sequence spans 244 residues: Carboxy-S-adenosyl-L-methionine synthase (244 aa).

S-adenosyl-L-methionine contacts are provided by residues tyrosine 38, 63-65 (GCS), 88-89 (DN), 116-117 (DI), asparagine 131, and arginine 198.

The protein belongs to the class I-like SAM-binding methyltransferase superfamily. Cx-SAM synthase family. As to quaternary structure, homodimer.

The enzyme catalyses prephenate + S-adenosyl-L-methionine = carboxy-S-adenosyl-L-methionine + 3-phenylpyruvate + H2O. Catalyzes the conversion of S-adenosyl-L-methionine (SAM) to carboxy-S-adenosyl-L-methionine (Cx-SAM). This chain is Carboxy-S-adenosyl-L-methionine synthase, found in Haemophilus ducreyi (strain 35000HP / ATCC 700724).